A 1161-amino-acid chain; its full sequence is DNA-directed RNA polymerase subunit beta (1161 aa).

It belongs to the RNA polymerase beta chain family. The RNAP catalytic core consists of 2 alpha, 1 beta, 1 beta' and 1 omega subunit. When a sigma factor is associated with the core the holoenzyme is formed, which can initiate transcription.

The catalysed reaction is RNA(n) + a ribonucleoside 5'-triphosphate = RNA(n+1) + diphosphate. In terms of biological role, DNA-dependent RNA polymerase catalyzes the transcription of DNA into RNA using the four ribonucleoside triphosphates as substrates. In Streptomyces avermitilis (strain ATCC 31267 / DSM 46492 / JCM 5070 / NBRC 14893 / NCIMB 12804 / NRRL 8165 / MA-4680), this protein is DNA-directed RNA polymerase subunit beta.